Here is a 414-residue protein sequence, read N- to C-terminus: MVLGKVKSLTISFDCLNDSNVPVYSSGDTVSGRVNLEVTGEIRVKSLKIHARGHAKVRWTESRNAGSNTAYTQNYTEEVEYFNHKDILIGHERDDDNSEEGFHTIHSGRHEYAFSFELPQTPLATSFEGRHGSVRYWVKAELHRPWLLPVKLKKEFTVFEHIDINTPSLLSPQAGTKEKTLCCWFCTSGPISLSAKIERKGYTPGESIQIFAEIENCSSRMVVPKAAIYQTQAFYAKGKMKEVKQLVANLRGESLSSGKTETWNGKLLKIPPVSPSILDCSIIRVEYSLMVYVDIPGAMDLFLNLPLVIGTIPLHPFGSRTSSVSSQCSMNMNWLSLSLPERPEAPPSYAEVVTEEQRRNNLAPVSACDDFERALQGPLFAYIQEFRFLPPPLYSEIDPNPDQSADDRPSCPSR.

2 consecutive short sequence motifs (PPxY motif) follow at residues 346 to 349 and 391 to 394; these read PPSY and PPLY. Positions 393 to 414 are disordered; sequence LYSEIDPNPDQSADDRPSCPSR. Residues 405-414 are compositionally biased toward basic and acidic residues; it reads ADDRPSCPSR.

The protein belongs to the arrestin family. In terms of assembly, interacts (via PPxY motifs) with NEDD4 (via WW domains). Interacts with ADRB2. Interacts with ADRB3. Interacts with HGS (via PPxY motifs). Does not bind TXN (thioredoxin). Interacts with ITCH. Interacts with WWP1 (via WW domains). Highly expressed in skeletal muscle, placenta, kidney, lung, liver, blood, adrenal gland, lymph node, mammary gland, thyroid, and trachea. Very low levels in colon, thymus, spleen, small intestine, bladder and bone marrow. Strong expression in differentiated adipocytes compared to preadipocytes. Detected in omental fat and subcutaneous fat tissue.

The protein resides in the cytoplasm. It is found in the cell membrane. The protein localises to the lysosome. Its subcellular location is the endosome. It localises to the early endosome. Adapter protein that plays a role in regulating cell-surface expression of adrenergic receptors and probably also other G protein-coupled receptors. Plays a role in NEDD4-mediated ubiquitination and endocytosis af activated ADRB2 and subsequent ADRB2 degradation. May recruit NEDD4 to ADRB2. Alternatively, may function as adapter protein that does not play a major role in recruiting NEDD4 to ADRB2, but rather plays a role in a targeting ADRB2 to endosomes. The sequence is that of Arrestin domain-containing protein 3 (ARRDC3) from Homo sapiens (Human).